The chain runs to 230 residues: 7-cyano-7-deazaguanine synthase (230 aa).

Position 14–24 (14–24) interacts with ATP; the sequence is LSGGLDSTTTL. C194, C204, C207, and C210 together coordinate Zn(2+).

This sequence belongs to the QueC family. Zn(2+) serves as cofactor.

The catalysed reaction is 7-carboxy-7-deazaguanine + NH4(+) + ATP = 7-cyano-7-deazaguanine + ADP + phosphate + H2O + H(+). The protein operates within purine metabolism; 7-cyano-7-deazaguanine biosynthesis. In terms of biological role, catalyzes the ATP-dependent conversion of 7-carboxy-7-deazaguanine (CDG) to 7-cyano-7-deazaguanine (preQ(0)). The protein is 7-cyano-7-deazaguanine synthase of Vesicomyosocius okutanii subsp. Calyptogena okutanii (strain HA).